Reading from the N-terminus, the 113-residue chain is Insulin-like peptide 02 (113 aa).

A signal peptide spans 1–22 (MFYLTFLLFGAICIGQIQLGQP). A propeptide spanning residues 23–42 (VKFKVNEDGHRPSVYPIKYR) is cleaved from the precursor. Cystine bridges form between C44-C99, C56-C112, and C98-C103. Positions 62-87 (RRKRSIEADIITDKDTANSYFNRVKR) are cleaved as a propeptide — c peptide.

The protein belongs to the insulin family.

The protein localises to the secreted. Its function is as follows. Insulin decreases blood glucose concentration. May have evolved to activate insulin receptors (INSR) in vertebrates. Molecular docking studies reveals unique interaction with the human insulin receptor. In vivo, insulin-like peptide injection reduces blood glucose levels in two models of zebrafish diabetes (streptozotocin- and glucose-induced). Also shorter swimming distance of zebrafish larvae, an effect which is not observed with human insulin. This is Insulin-like peptide 02 from Exaiptasia diaphana (Tropical sea anemone).